The following is a 718-amino-acid chain: Fatty acid oxidation complex subunit alpha (718 aa).

Positions 1–188 (MIYQGESIRV…KVGAVDAVVE (188 aa)) are enoyl-CoA hydratase/isomerase. D295 contributes to the substrate binding site. Residues 310–718 (TKEIKTAGVL…KSYFDTTSAK (409 aa)) form a 3-hydroxyacyl-CoA dehydrogenase region. Residues M324, D343, 400–402 (VVE), K407, and S429 contribute to the NAD(+) site. H450 (for 3-hydroxyacyl-CoA dehydrogenase activity) is an active-site residue. N453 lines the NAD(+) pocket. Residues N500 and Y658 each contribute to the substrate site.

It in the N-terminal section; belongs to the enoyl-CoA hydratase/isomerase family. This sequence in the C-terminal section; belongs to the 3-hydroxyacyl-CoA dehydrogenase family. Heterotetramer of two alpha chains (FadB) and two beta chains (FadA).

The enzyme catalyses a (3S)-3-hydroxyacyl-CoA + NAD(+) = a 3-oxoacyl-CoA + NADH + H(+). It catalyses the reaction a (3S)-3-hydroxyacyl-CoA = a (2E)-enoyl-CoA + H2O. The catalysed reaction is a 4-saturated-(3S)-3-hydroxyacyl-CoA = a (3E)-enoyl-CoA + H2O. It carries out the reaction (3S)-3-hydroxybutanoyl-CoA = (3R)-3-hydroxybutanoyl-CoA. The enzyme catalyses a (3Z)-enoyl-CoA = a 4-saturated (2E)-enoyl-CoA. It catalyses the reaction a (3E)-enoyl-CoA = a 4-saturated (2E)-enoyl-CoA. Its pathway is lipid metabolism; fatty acid beta-oxidation. Its function is as follows. Involved in the aerobic and anaerobic degradation of long-chain fatty acids via beta-oxidation cycle. Catalyzes the formation of 3-oxoacyl-CoA from enoyl-CoA via L-3-hydroxyacyl-CoA. It can also use D-3-hydroxyacyl-CoA and cis-3-enoyl-CoA as substrate. This Idiomarina loihiensis (strain ATCC BAA-735 / DSM 15497 / L2-TR) protein is Fatty acid oxidation complex subunit alpha.